A 54-amino-acid chain; its full sequence is UPF0391 membrane protein PFL_0093 (54 aa).

The next 2 membrane-spanning stretches (helical) occupy residues tryptophan 4–alanine 24 and glycine 29–glycine 49.

This sequence belongs to the UPF0391 family.

Its subcellular location is the cell membrane. The polypeptide is UPF0391 membrane protein PFL_0093 (Pseudomonas fluorescens (strain ATCC BAA-477 / NRRL B-23932 / Pf-5)).